We begin with the raw amino-acid sequence, 1244 residues long: Alpha-protein kinase 1 (1244 aa).

ADP-D-glycero-beta-D-manno-heptose contacts are provided by residues F61, Q67, R116, 150–153 (RQAR), D231, K233, 236–237 (ST), and F295. 4 disordered regions span residues 650–675 (LQEP…TPFS), 701–737 (VRNM…THPS), 757–798 (VKDR…TEDA), and 824–848 (NWPV…DPDA). Over residues 652–675 (EPNNDNLEPSQNQPQQQMPLTPFS) the composition is skewed to polar residues. Low complexity predominate over residues 713 to 726 (SRPSYRSASWSSDS). A compositionally biased stretch (basic and acidic residues) spans 757 to 771 (VKDRQGKEQGEEISE). The segment covering 787–798 (PEGETAESTEDA) has biased composition (acidic residues). Residues 1017-1237 (KYSKKSELWT…ICHRLSLTRP (221 aa)) form the Alpha-type protein kinase domain.

The protein belongs to the protein kinase superfamily. Alpha-type protein kinase family. ALPK subfamily. Highly expressed in liver. Expressed in the optic nerve and retinal pigmented epithelium. Lower expression is observed in the macula and extramacular retina.

The protein resides in the cytoplasm. The protein localises to the cytosol. It localises to the cytoskeleton. It is found in the spindle pole. Its subcellular location is the microtubule organizing center. The protein resides in the centrosome. The protein localises to the cell projection. It localises to the cilium. The catalysed reaction is L-seryl-[protein] + ATP = O-phospho-L-seryl-[protein] + ADP + H(+). The enzyme catalyses L-threonyl-[protein] + ATP = O-phospho-L-threonyl-[protein] + ADP + H(+). With respect to regulation, serine/threonine-protein kinase activity is stimulated upon ADP-D-glycero-beta-D-manno-heptose (ADP-Heptose)-binding. Functionally, serine/threonine-protein kinase that detects bacterial pathogen-associated molecular pattern metabolites (PAMPs) and initiates an innate immune response, a critical step for pathogen elimination and engagement of adaptive immunity. Specifically recognizes and binds ADP-D-glycero-beta-D-manno-heptose (ADP-Heptose), a potent PAMP present in all Gram-negative and some Gram-positive bacteria. ADP-Heptose-binding stimulates its kinase activity to phosphorylate and activate TIFA, triggering pro-inflammatory NF-kappa-B signaling. May be involved in monosodium urate monohydrate (MSU)-induced inflammation by mediating phosphorylation of unconventional myosin MYO9A. May also play a role in apical protein transport by mediating phosphorylation of unconventional myosin MYO1A. May play a role in ciliogenesis. The protein is Alpha-protein kinase 1 of Homo sapiens (Human).